A 765-amino-acid polypeptide reads, in one-letter code: 5-methyltetrahydropteroyltriglutamate--homocysteine methyltransferase (765 aa).

Residues K18 and N116 each coordinate 5-methyltetrahydropteroyltri-L-glutamate. L-homocysteine is bound by residues 437 to 439 (IGS) and E490. L-methionine-binding positions include 437-439 (IGS) and E490. 5-methyltetrahydropteroyltri-L-glutamate is bound by residues D495, Y518, 521 to 522 (RC), and W567. D605 contributes to the L-homocysteine binding site. D605 provides a ligand contact to L-methionine. Zn(2+)-binding residues include H647, C649, H658, D662, and E671. H701 serves as the catalytic Proton donor. C733 is a binding site for Zn(2+).

It belongs to the vitamin-B12 independent methionine synthase family. Zn(2+) serves as cofactor.

It localises to the cytoplasm. The enzyme catalyses 5-methyltetrahydropteroyltri-L-glutamate + L-homocysteine = tetrahydropteroyltri-L-glutamate + L-methionine. It functions in the pathway amino-acid biosynthesis; L-methionine biosynthesis via de novo pathway; L-methionine from L-homocysteine (MetE route): step 1/1. In terms of biological role, catalyzes the transfer of a methyl group from 5-methyltetrahydrofolate to homocysteine resulting in methionine formation. In Mesembryanthemum crystallinum (Common ice plant), this protein is 5-methyltetrahydropteroyltriglutamate--homocysteine methyltransferase (METE).